We begin with the raw amino-acid sequence, 756 residues long: MESSDVELDFQRSVQAVLRELNTPNPALQSNQGMWRWSLHKKVERNPGKSSILVRILLRELEKAESEDGRRVIIPLLLTLMSVLTKATGIPEDLYHRAYTFCTRLLTLPAPYSTVALDCAIRLKTETAVPGTLYQRTVIAEQNLISELYPYQERVFLFVDPELVSASVCSALLLEIQAAQEQQTPEACMRHVVSHALQAALGEACHTGALNRKLQASSRRVLEYYFHAVVAAIEQVASEDSPSRLGHLEKMEEIYCSLLGPATTRRHCVGDLLQDRLPSIPLPSPYITFHLWTDQEQLWKELVLFLRPRSQLRLSADLDALDLQGFRLDRDLARVSTDSGIERDLPLGSDELPDPSSSEMERAALQRKGGIKKRVWPPDFFMPGSWDGPPGLHRRTGRPSGDGELLPGVSRVHTARVLVLGDDRMLGRLAQAYYRLRKRETKKFCLTPRLSLQLYYIPVLAPQVTGQDPEASRKPELGELASFLGRVDPWYESTVNTLCPAILKLAEMPPYLDTSRTVDPFILDVITYYVRMGTQPIYFQLYKVKIFTSLSHDPTEDIFLTELKVKIQDSKSPKEGSSPRRRGAAEGTGAELSMCYQKALLSHRPREVTVSLRATGLVLKAIPAGDTEVSGFFHCTSPNAASATDCSCLHVSVTEVVKSSNLAGRSFTTSTNTFRTSSIQVQSQDQRLLTLWLDKDGRRTFRDVVRFEVSPCPEPCSRTQKSKTSALNSHGQETEKNMAKPNSLLMPINTFSGIIQ.

Disordered regions lie at residues 570-589 (SKSPKEGSSPRRRGAAEGTG) and 716-738 (CSRTQKSKTSALNSHGQETEKNM). The span at 717–731 (SRTQKSKTSALNSHG) shows a compositional bias: polar residues.

In terms of assembly, heterodimer of a catalytic subunit (PIK3CG) and a regulatory (PIK3R6) subunit. The binding of PIK3R6 to PIK3CG may exclude the binding of PIK3R5 to PIK3CG. Interacts with beta-gamma G protein dimers. Interacts with PDE3B and RAPGEF3; form a signaling complex that regulates phosphatidylinositol 3-kinase gamma in angiogenesis. In terms of tissue distribution, highly expressed in heart. In a lower extent, also expressed in brain, spleen, lung, liver, kidney, prostate, thyroid, salivary gland, dendritic cells, macrophages and neutrophils.

The protein localises to the cytoplasm. It is found in the cell membrane. Its function is as follows. Regulatory subunit of the PI3K gamma complex. Acts as an adapter to drive activation of PIK3CG by beta-gamma G protein dimers. The PIK3CG:PIK3R6 heterodimer is much less sensitive to beta-gamma G proteins than PIK3CG:PIK3R5 and its membrane recruitment and beta-gamma G protein dimer-dependent activation requires HRAS bound to PIK3CG. Recruits of the PI3K gamma complex to a PDE3B:RAPGEF3 signaling complex involved in angiogenesis; signaling seems to involve RRAS. This is Phosphoinositide 3-kinase regulatory subunit 6 (Pik3r6) from Mus musculus (Mouse).